Reading from the N-terminus, the 809-residue chain is Probable disease resistance protein At5g66900 (809 aa).

An RPW8 domain is found at 1–150 (MNDWASLGIG…LSKRMDLLSV (150 aa)). A coiled-coil region spans residues 50–86 (PLTQKIDSMQKELDFGVKELKELRDTIERADVAVRKF). NB-ARC domains follow at residues 153-280 (PVFR…DDVW) and 339-438 (SPDE…DMWV). Position 194–201 (194–201 (APPGCGKT)) interacts with ATP. The stretch at 494–515 (QSEFKENLERKRLNLEILENTF) forms a coiled coil. LRR repeat units follow at residues 650–672 (KLQE…ISEI), 674–696 (SLKT…IGNL), 698–720 (RLEV…TEGL), and 722–744 (NLRF…IGKL).

Belongs to the disease resistance NB-LRR family.

Functionally, probable disease resistance protein. The sequence is that of Probable disease resistance protein At5g66900 from Arabidopsis thaliana (Mouse-ear cress).